The chain runs to 925 residues: Probable glycoprotein hormone G-protein coupled receptor (925 aa).

Positions 1 to 27 are cleaved as a signal peptide; that stretch reads MEDRGICPRVLQVLFLVVLILISPVYA. Residues 28-529 lie on the Extracellular side of the membrane; that stretch reads AKNDACTKCS…EDIMGYVWLT (502 aa). The N-linked (GlcNAc...) asparagine glycan is linked to N61. LRR repeat units lie at residues 85 to 106, 110 to 131, 134 to 155, 156 to 180, 181 to 202, 203 to 224, 230 to 250, and 251 to 273; these read KLKY…RVKN, SLIT…AFDD, QLTQ…NKTS, SVTK…GNLP, SLEN…IFRQ, NTRL…NEDA, SLKT…RGLK, and NLHF…DSIR. N152 carries an N-linked (GlcNAc...) asparagine glycan. N212 carries an N-linked (GlcNAc...) asparagine glycan. Positions 299–493 are disordered; it reads TMQKPSTEEN…PTLIPHSNHT (195 aa). Residues 301–318 are compositionally biased toward polar residues; that stretch reads QKPSTEENNGQTTASSPT. The 1; truncated repeat unit spans residues 333–349; the sequence is STQPHTTSGFGGGGFPG. Residues 333-461 are 5 X approximate tandem repeats; that stretch reads STQPHTTSGF…PGGGGFPGGG (129 aa). Gly residues predominate over residues 341–362; the sequence is GFGGGGFPGGGGGFPGGGGFPA. 3 consecutive repeat copies span residues 350–384, 385–419, and 420–453. The segment covering 365-375 has biased composition (polar residues); that stretch reads SKTSTQPHTTS. Positions 376–397 are enriched in gly residues; the sequence is GFGGGGFPGGGGGFPGGGGFPA. The span at 400–410 shows a compositional bias: polar residues; it reads SKTSTQPHTTS. Positions 411 to 432 are enriched in gly residues; that stretch reads GFGGGGFPGGGGGFPGGGGFPG. The segment covering 434 to 445 has biased composition (polar residues); the sequence is SNTSTQPHTTSN. N435 carries an N-linked (GlcNAc...) asparagine glycan. Over residues 446 to 462 the composition is skewed to gly residues; that stretch reads SGGGGFPGGGGFPGGGT. Residues 454 to 461 form a 5; truncated repeat; the sequence is GGGFPGGG. The span at 476 to 493 shows a compositional bias: polar residues; the sequence is VHQSTADPPTLIPHSNHT. Residue N495 is glycosylated (N-linked (GlcNAc...) asparagine). Residues 530-551 form a helical membrane-spanning segment; sequence VVSFMVGAVALVANLVVALVLL. Residues 552-561 lie on the Cytoplasmic side of the membrane; that stretch reads TSQRRLNVTR. Residues 562-584 form a helical membrane-spanning segment; it reads FLMCNLAFADFILGLYIFILTSV. Topologically, residues 585 to 606 are extracellular; sequence SAVTRGDYHNYVQQWQNGAGCK. The chain crosses the membrane as a helical span at residues 607 to 628; the sequence is ILGFLAVFSSELSLFTLVMMTI. At 629–651 the chain is on the cytoplasmic side; the sequence is ERFYAIVHAMHMNARLSFRKTVR. Residues 652–673 traverse the membrane as a helical segment; that stretch reads FMIGGWIFALVMAVVPLTGVSG. Over 674–691 the chain is Extracellular; that stretch reads YSKVAICLPFDVSDATST. The helical transmembrane segment at 692 to 712 threads the bilayer; it reads AYVAFLLLVNGASFISVMYLY. At 713-739 the chain is on the cytoplasmic side; it reads SRMLYVVVSGGDMEGAPKRNDSKVAKR. A helical transmembrane segment spans residues 740–763; sequence MAILVFTDMLCWAPIAFFGLLAAF. At 764–774 the chain is on the extracellular side; that stretch reads GQTLLTVTQSK. Residues 775 to 795 traverse the membrane as a helical segment; that stretch reads ILLVFFFPINSICNPFLYAFF. The Cytoplasmic portion of the chain corresponds to 796–925; that stretch reads TKAFKRELFT…QKQKILQSPS (130 aa). Residues 904–925 are disordered; sequence VTKSSSPPHLKLQKQKILQSPS.

This sequence belongs to the G-protein coupled receptor 1 family. FSH/LSH/TSH subfamily.

Its subcellular location is the cell membrane. In terms of biological role, probable receptor for a glycoprotein hormone. In Anthopleura elegantissima (Green aggregating anemone), this protein is Probable glycoprotein hormone G-protein coupled receptor.